A 328-amino-acid chain; its full sequence is Glycerol-3-phosphate dehydrogenase [NAD(P)+] (328 aa).

Positions 15, 35, 36, and 105 each coordinate NADPH. Sn-glycerol 3-phosphate contacts are provided by K105 and G131. A135 contacts NADPH. Positions 186, 239, 249, 250, and 251 each coordinate sn-glycerol 3-phosphate. The active-site Proton acceptor is the K186. Residue R250 participates in NADPH binding. NADPH contacts are provided by V270 and E272.

The protein belongs to the NAD-dependent glycerol-3-phosphate dehydrogenase family.

Its subcellular location is the cytoplasm. The catalysed reaction is sn-glycerol 3-phosphate + NAD(+) = dihydroxyacetone phosphate + NADH + H(+). It carries out the reaction sn-glycerol 3-phosphate + NADP(+) = dihydroxyacetone phosphate + NADPH + H(+). It functions in the pathway membrane lipid metabolism; glycerophospholipid metabolism. Its function is as follows. Catalyzes the reduction of the glycolytic intermediate dihydroxyacetone phosphate (DHAP) to sn-glycerol 3-phosphate (G3P), the key precursor for phospholipid synthesis. The chain is Glycerol-3-phosphate dehydrogenase [NAD(P)+] from Deinococcus radiodurans (strain ATCC 13939 / DSM 20539 / JCM 16871 / CCUG 27074 / LMG 4051 / NBRC 15346 / NCIMB 9279 / VKM B-1422 / R1).